The chain runs to 113 residues: UPF0482 protein YnfB (113 aa).

The signal sequence occupies residues 1–28 (MKITLSKRIDLLAFLLPCALALSTTVHA).

Belongs to the UPF0482 family.

This is UPF0482 protein YnfB from Escherichia coli O157:H7.